Here is a 99-residue protein sequence, read N- to C-terminus: A-type ATP synthase subunit F (99 aa).

The protein belongs to the V-ATPase F subunit family. Has multiple subunits with at least A(3), B(3), C, D, E, F, H, I and proteolipid K(x).

It is found in the cell membrane. Functionally, component of the A-type ATP synthase that produces ATP from ADP in the presence of a proton gradient across the membrane. This Methanococcus maripaludis (strain DSM 14266 / JCM 13030 / NBRC 101832 / S2 / LL) protein is A-type ATP synthase subunit F.